Here is a 174-residue protein sequence, read N- to C-terminus: RNA pyrophosphohydrolase (174 aa).

A Nudix hydrolase domain is found at 6-149 (GYRPNVGIIL…KRDVYLEALK (144 aa)). A Nudix box motif is present at residues 38–59 (GGIKPGESPETAMYRELYEEVG).

The protein belongs to the Nudix hydrolase family. RppH subfamily. A divalent metal cation serves as cofactor.

In terms of biological role, accelerates the degradation of transcripts by removing pyrophosphate from the 5'-end of triphosphorylated RNA, leading to a more labile monophosphorylated state that can stimulate subsequent ribonuclease cleavage. In Neisseria gonorrhoeae (strain ATCC 700825 / FA 1090), this protein is RNA pyrophosphohydrolase.